The sequence spans 442 residues: Mirror-image polydactyly gene 1 protein (442 aa).

The tract at residues 1-39 is disordered; sequence MENWSKDITHSYLEQETTGINKSTQPDEQLTMNSEKSMH. The segment covering 12 to 35 has biased composition (polar residues); sequence YLEQETTGINKSTQPDEQLTMNSE. 2 coiled-coil regions span residues 107-212 and 253-435; these read SDKE…LENI and ECKM…KVGT.

In terms of tissue distribution, expressed very weakly in heart, liver, skeletal muscle, kidney, pancreas and fetal kidney. Not detected in brain, placenta and lung.

The polypeptide is Mirror-image polydactyly gene 1 protein (MIPOL1) (Homo sapiens (Human)).